A 165-amino-acid polypeptide reads, in one-letter code: Glutamyl-tRNA(Gln) amidotransferase subunit F, mitochondrial (165 aa).

The transit peptide at 1 to 19 directs the protein to the mitochondrion; the sequence is MKSILRSTTRNLITSSRRF.

Belongs to the GatF family. Subunit of the heterotrimeric GatFAB amidotransferase (AdT) complex, composed of A, B and F subunits.

The protein resides in the mitochondrion inner membrane. It catalyses the reaction L-glutamyl-tRNA(Gln) + L-glutamine + ATP + H2O = L-glutaminyl-tRNA(Gln) + L-glutamate + ADP + phosphate + H(+). Its function is as follows. Allows the formation of correctly charged Gln-tRNA(Gln) through the transamidation of misacylated Glu-tRNA(Gln) in the mitochondria. The reaction takes place in the presence of glutamine and ATP through an activated gamma-phospho-Glu-tRNA(Gln). Required for proper protein synthesis within the mitochondrion. The protein is Glutamyl-tRNA(Gln) amidotransferase subunit F, mitochondrial of Candida albicans (strain WO-1) (Yeast).